We begin with the raw amino-acid sequence, 446 residues long: Glutamine synthetase (446 aa).

The 88-residue stretch at 15 to 102 folds into the GS beta-grasp domain; that stretch reads RDIRFVRLWF…MFCDITMPDG (88 aa). Residues 109–446 enclose the GS catalytic domain; that stretch reads SRHVLRRQLA…PYELKNYLSL (338 aa). The Mg(2+) site is built by glutamate 132 and glutamate 134. Residue glutamate 184 coordinates ATP. Residues glutamate 189 and glutamate 196 each coordinate Mg(2+). Glycine 241 contacts L-glutamate. Histidine 245 contributes to the Mg(2+) binding site. Residues 247–249 and serine 249 contribute to the ATP site; that span reads HMS. L-glutamate contacts are provided by arginine 298, glutamate 304, and arginine 316. Arginine 316 and arginine 321 together coordinate ATP. Residue glutamate 336 participates in Mg(2+) binding. Arginine 338 serves as a coordination point for L-glutamate. Lysine 363 participates in a covalent cross-link: Isoglutamyl lysine isopeptide (Lys-Gln) (interchain with Q-Cter in protein Pup).

Belongs to the glutamine synthetase family. As to quaternary structure, oligomer of 12 subunits arranged in the form of two hexagons. In its feedback-inhibited form, interacts with TnrA in order to block its DNA-binding activity. The cofactor is Mg(2+).

It is found in the cytoplasm. The catalysed reaction is L-glutamate + NH4(+) + ATP = L-glutamine + ADP + phosphate + H(+). With respect to regulation, inhibited by glutamine. Functionally, glutamine synthetase (GS) is an unusual multitasking protein that functions as an enzyme, a transcription coregulator, and a chaperone in ammonium assimilation and in the regulation of genes involved in nitrogen metabolism. It catalyzes the ATP-dependent biosynthesis of glutamine from glutamate and ammonia. Feedback-inhibited GlnA also interacts with and regulates the activity of the transcriptional regulator TnrA. During nitrogen limitation, TnrA is in its DNA-binding active state and turns on the transcription of genes required for nitrogen assimilation. Under conditions of nitrogen excess, feedback-inhibited GlnA forms a stable complex with TnrA, which inhibits its DNA-binding activity. In contrast, feedback-inhibited GlnA acts as a chaperone to stabilize the DNA-binding activity of GlnR, which represses the transcription of nitrogen assimilation genes. In Mycolicibacterium smegmatis (strain ATCC 700084 / mc(2)155) (Mycobacterium smegmatis), this protein is Glutamine synthetase.